The primary structure comprises 356 residues: Carminomycin 4-O-methyltransferase DauK (356 aa).

Residue arginine 153 participates in S-adenosyl-L-methionine binding. Residue aspartate 163 coordinates substrate. S-adenosyl-L-methionine-binding positions include glycine 187, glutamate 210, aspartate 237–phenylalanine 238, and serine 252. Substrate is bound by residues asparagine 257 and arginine 303.

Belongs to the class I-like SAM-binding methyltransferase superfamily. Cation-independent O-methyltransferase family. As to quaternary structure, homodimer and homotetramer in equilibrium.

The enzyme catalyses carminomycin + S-adenosyl-L-methionine = daunorubicin + S-adenosyl-L-homocysteine + H(+). It participates in antibiotic biosynthesis; daunorubicin biosynthesis. Its pathway is antibiotic biosynthesis; carminomycin biosynthesis. Strongly inhibited by S-adenosyl-L-homocysteine and weakly by adenine and methionine. Functionally, involved in the biosynthesis of the anthracyclines carminomycin and daunorubicin (daunomycin) which are aromatic polyketide antibiotics that exhibit high cytotoxicity and are widely applied in the chemotherapy of a variety of cancers. In vivo, catalyzes the transfer of a methyl group from S-adenosyl-L-methionine to the 4-O-position of carminomycin to form daunorubicin. In vitro, it also methylates the anthracyclines rhodomycin D (10-carbomethoxy-13-deoxycarminomycin), 10-carboxy-13-deoxycarminomycin, 13-deoxy-carminomycin and 13-dihydrocarminomycin at the 4-hydroxyl position. This Streptomyces sp. (strain C5) protein is Carminomycin 4-O-methyltransferase DauK (dauK).